The sequence spans 238 residues: Phosphatidylcholine synthase (238 aa).

Residues 1–16 (MPVNLSMTPINKAKAW) lie on the Cytoplasmic side of the membrane. A helical transmembrane segment spans residues 17–37 (GVHAVTASGVILALLALLALV). Topologically, residues 38 to 41 (DNKP) are periplasmic. A helical transmembrane segment spans residues 42 to 62 (QACLLWLGLALLVDGLDGTLA). The Cytoplasmic segment spans residues 63–75 (RKYEVKEMLPHFD). A helical membrane pass occupies residues 76 to 96 (GSVLDLVIDYLTYVFIPAIFI). The Periplasmic segment spans residues 97 to 104 (YRYIPLPE). A helical membrane pass occupies residues 105-125 (HFELLAVGVILVSSLFCFCNV). Over 126 to 132 (NMKSTDN) the chain is Cytoplasmic. A helical membrane pass occupies residues 133–153 (YFVGFPAAWNVVAVYFYVLDL). Over 154-155 (HP) the chain is Periplasmic. Residues 156–176 (WVNLATVLVLAALTLTRMKFL) form a helical membrane-spanning segment. Residues 177–183 (HPFRVRQ) lie on the Cytoplasmic side of the membrane. A helical membrane pass occupies residues 184–204 (FMPLNIAVTFVWLISSGLLIV). At 205–209 (QQPAD) the chain is on the periplasmic side. A helical membrane pass occupies residues 210–230 (LPILLGLWFAASAYFVGICLW). At 231–238 (RSAREWFG) the chain is on the cytoplasmic side.

It belongs to the CDP-alcohol phosphatidyltransferase class-I family. It depends on Mn(2+) as a cofactor.

It localises to the cell inner membrane. It carries out the reaction a CDP-1,2-diacyl-sn-glycerol + choline = a 1,2-diacyl-sn-glycero-3-phosphocholine + CMP + H(+). Its function is as follows. Condenses choline with CDP-diglyceride to produce phosphatidylcholine and CMP. In Pseudomonas aeruginosa (strain ATCC 15692 / DSM 22644 / CIP 104116 / JCM 14847 / LMG 12228 / 1C / PRS 101 / PAO1), this protein is Phosphatidylcholine synthase.